The following is a 399-amino-acid chain: Transaminase BacF (399 aa).

Pyridoxal 5'-phosphate-binding positions include 103 to 104, tyrosine 128, asparagine 178, tyrosine 209, and 236 to 238; these read GK and SFS. Lysine 239 bears the N6-(pyridoxal phosphate)lysine mark. Arginine 247 provides a ligand contact to pyridoxal 5'-phosphate.

It belongs to the class-I pyridoxal-phosphate-dependent aminotransferase family. Homodimer. The cofactor is pyridoxal 5'-phosphate.

It is found in the cytoplasm. Its pathway is antibiotic biosynthesis; bacilysin biosynthesis. In terms of biological role, part of the bacABCDEF operon responsible for the biosynthesis of the nonribosomally synthesized dipeptide antibiotic bacilysin, composed of L-alanine and L-anticapsin. Bacilysin is an irreversible inactivator of the glutaminase domain of glucosamine synthetase. Catalyzes the reductive amination of the C2 ketone of tetrahydro-hydroxyphenylpyruvate (H4HPP), with L-Phe as an amino donor, to yield tetrahydrotyrosine (H4Tyr) diastereomer. D-Phe is not an effective amino donor. BacF associated to BacG converts 3E,7R- and 3Z,7R-ex-H2HPP to 2S,4R,7R- and 2S,4S,7R-H4Tyr, respectively. Given that bacilysin has the 2S,4S stereochemistry in its anticapsin moiety, it is likely that the 2S,4S-H4Tyr is the diastereomer used for the biosynthesis. The sequence is that of Transaminase BacF from Bacillus subtilis (strain 168).